The following is a 98-amino-acid chain: Small ribosomal subunit protein uS17 (98 aa).

It belongs to the universal ribosomal protein uS17 family. Part of the 30S ribosomal subunit.

In terms of biological role, one of the primary rRNA binding proteins, it binds specifically to the 5'-end of 16S ribosomal RNA. This chain is Small ribosomal subunit protein uS17, found in Leptothrix cholodnii (strain ATCC 51168 / LMG 8142 / SP-6) (Leptothrix discophora (strain SP-6)).